The chain runs to 319 residues: 2-oxoglutarate and iron-dependent oxygenase domain-containing protein 3 (319 aa).

Positions 1-34 (MAPQRRAATKAPEGNGAAERRNRSSTKKDRAPRE) are disordered. Residues 1–42 (MAPQRRAATKAPEGNGAAERRNRSSTKKDRAPREVQRLWQRP) lie on the Cytoplasmic side of the membrane. Residues 18 to 34 (AERRNRSSTKKDRAPRE) show a composition bias toward basic and acidic residues. Residues 43-65 (WLRTAGLGAGFVLTALLLWSSLG) form a helical; Signal-anchor for type II membrane protein membrane-spanning segment. Residues 66–319 (ADDGVAEVLA…DHGIEDPAFP (254 aa)) lie on the Lumenal side of the membrane. The 103-residue stretch at 207–309 (KPTFFSRINS…AITIAFSCNP (103 aa)) folds into the Fe2OG dioxygenase domain. Residue Asn-215 is glycosylated (N-linked (GlcNAc...) asparagine). Fe cation contacts are provided by His-230, Asp-232, and His-288. Arg-298 is an active-site residue. Arg-298 contributes to the 2-oxoglutarate binding site.

The protein belongs to the OGFOD3 family. Fe(2+) serves as cofactor. The cofactor is L-ascorbate.

It localises to the membrane. This Homo sapiens (Human) protein is 2-oxoglutarate and iron-dependent oxygenase domain-containing protein 3 (OGFOD3).